A 2606-amino-acid polypeptide reads, in one-letter code: Large tegument protein deneddylase (2606 aa).

Positions 1–235 (MAFQAQTDTG…LKRSGAYVNL (235 aa)) are deubiquitination activity. The 212-residue stretch at 14-225 (LATASSHQGD…LLANYGIASA (212 aa)) folds into the Peptidase C76 domain. Active-site residues include Cys34, Asp163, and His165. Disordered regions lie at residues 318-349 (IAIS…PNEA), 390-411 (DTDS…KSGQ), 1020-1135 (KKGL…ESSE), 2253-2316 (PEIH…PTPL), and 2434-2458 (PPHD…ERKY). Residues 1038–1050 (TPVTDSKLIQDSQ) show a composition bias toward polar residues. The segment covering 1051 to 1061 (QNDRHQKEKPL) has biased composition (basic and acidic residues). A compositionally biased stretch (polar residues) spans 1085–1097 (KPQNLSLPVSTNK). Over residues 1105-1132 (ESSPIESTSPSHSPVSSMESQNGSFSLE) the composition is skewed to low complexity. Residues 2304 to 2316 (PNPPRPTTFPTPL) are compositionally biased toward pro residues.

The protein belongs to the herpesviridae large tegument protein family. Interacts with host CUL1 and CUL4A; these interactions inhibit the E3 ligase activity of cullins. Interacts with inner tegument protein. Interacts with capsid vertex specific component CVC2. Interacts with the major capsid protein/MCP.

It is found in the virion tegument. The protein localises to the host cytoplasm. The protein resides in the host nucleus. It carries out the reaction Thiol-dependent hydrolysis of ester, thioester, amide, peptide and isopeptide bonds formed by the C-terminal Gly of ubiquitin (a 76-residue protein attached to proteins as an intracellular targeting signal).. Its function is as follows. Large tegument protein that plays multiple roles in the viral cycle. During viral entry, remains associated with the capsid while most of the tegument is detached and participates in the capsid transport toward the host nucleus. Plays a role in the routing of the capsid at the nuclear pore complex and subsequent uncoating. Within the host nucleus, acts as a deneddylase and promotes the degradation of nuclear CRLs (cullin-RING ubiquitin ligases) and thereby stabilizes nuclear CRL substrates, while cytoplasmic CRLs remain unaffected. These modifications prevent host cell cycle S-phase progression and create a favorable environment allowing efficient viral genome replication. Participates later in the secondary envelopment of capsids. Indeed, plays a linker role for the association of the outer viral tegument to the capsids together with the inner tegument protein. The chain is Large tegument protein deneddylase (64) from Connochaetes taurinus (Blue wildebeest).